Here is a 131-residue protein sequence, read N- to C-terminus: UPF0102 protein YraN (131 aa).

Residues 1–19 (MATVPTRSGSPRQLTTKQT) show a composition bias toward polar residues. The disordered stretch occupies residues 1 to 20 (MATVPTRSGSPRQLTTKQTG).

It belongs to the UPF0102 family.

In Escherichia coli O157:H7, this protein is UPF0102 protein YraN.